A 343-amino-acid polypeptide reads, in one-letter code: Cytoplasmic tRNA 2-thiolation protein 1 (343 aa).

Belongs to the TtcA family. CTU1/NCS6/ATPBD3 subfamily.

Its subcellular location is the cytoplasm. It functions in the pathway tRNA modification; 5-methoxycarbonylmethyl-2-thiouridine-tRNA biosynthesis. Functionally, plays a central role in 2-thiolation of mcm(5)S(2)U at tRNA wobble positions of tRNA(Lys), tRNA(Glu) and tRNA(Gln). Directly binds tRNAs and probably acts by catalyzing adenylation of tRNAs, an intermediate required for 2-thiolation. It is unclear whether it acts as a sulfurtransferase that transfers sulfur from thiocarboxylated URM1 onto the uridine of tRNAs at wobble position. This chain is Cytoplasmic tRNA 2-thiolation protein 1, found in Drosophila ananassae (Fruit fly).